Reading from the N-terminus, the 314-residue chain is Malate dehydrogenase (314 aa).

NAD(+)-binding positions include Gly7–Gly13 and Asp34. Residues Arg81 and Arg87 each contribute to the substrate site. NAD(+) contacts are provided by residues Asn94 and Ile117–Asn119. Residues Asn119 and Arg153 each contribute to the substrate site. Residue His177 is the Proton acceptor of the active site. Met230 is a binding site for NAD(+).

Belongs to the LDH/MDH superfamily. MDH type 1 family. Homodimer.

The catalysed reaction is (S)-malate + NAD(+) = oxaloacetate + NADH + H(+). Catalyzes the reversible oxidation of malate to oxaloacetate. This Glaesserella parasuis serovar 5 (strain SH0165) (Haemophilus parasuis) protein is Malate dehydrogenase.